The chain runs to 1095 residues: Tyrosine-sulfated glycopeptide receptor 1 (1095 aa).

The helical transmembrane segment at 23–43 threads the bilayer; it reads PHMVLFVLLYVLSISVFFLTV. N-linked (GlcNAc...) asparagine glycosylation is found at N62 and N73. LRR repeat units lie at residues 91-115, 116-139, 141-165, 170-195, 197-221, 223-246, 247-270, 271-294, 295-318, 320-342, 344-366, 367-391, 393-415, 416-439, 441-466, 470-494, 495-517, 518-542, and 566-589; these read ENRV…VLDL, QRLS…FLSA, DQLL…SFGN, IFPI…VFLQ, AFNL…MCTA, PQLT…LSRC, SRLS…IYNL, PELE…ITRL, TKLT…IGKL, KLSS…LANC, KLVK…DFSR, FQSL…VYSC, MMTA…VLEL, ESLS…SILQ, CKKL…DFLR, FPSL…LIKL, QRVE…WLGT, LPDL…LFQL, and NPNN…IYIK. The N-linked (GlcNAc...) asparagine glycan is linked to N165. N-linked (GlcNAc...) asparagine glycosylation is found at N199, N204, and N207. Residue N258 is glycosylated (N-linked (GlcNAc...) asparagine). An N-linked (GlcNAc...) asparagine glycan is attached at N341. Residue N377 is glycosylated (N-linked (GlcNAc...) asparagine). An N-linked (GlcNAc...) asparagine glycan is attached at N430. N-linked (GlcNAc...) asparagine glycosylation is found at N569, N592, N616, N627, N640, N662, and N714. LRR repeat units lie at residues 604–628, 629–652, and 654–677; these read LKVL…LSNL, TNLE…LTGL, and FLSY…QFDT. Residues 721–741 traverse the membrane as a helical segment; that stretch reads LVLGLFFGVSLILVLLALLVL. A phosphothreonine mark is found at T792 and T800. A Protein kinase domain is found at 803-1074; that stretch reads FSQANIIGCG…PNIQQVVDWL (272 aa). Residues 809 to 817 and K831 each bind ATP; that span reads IGCGGFGLV. Y876 and Y916 each carry phosphotyrosine. D929 acts as the Proton acceptor in catalysis. Y971 is subject to Phosphotyrosine.

It belongs to the protein kinase superfamily. Ser/Thr protein kinase family. In terms of assembly, homo- and heterodimers with PSKR1. Interacts (via C-terminus) with AHA1 and AHA2 (via the R-domain). Post-translationally, autophosphorylated. Expressed ubiquitously, including in the shoot apical meristem and in the elongation zone of the root meristem.

It localises to the cell membrane. It carries out the reaction L-seryl-[protein] + ATP = O-phospho-L-seryl-[protein] + ADP + H(+). The catalysed reaction is L-threonyl-[protein] + ATP = O-phospho-L-threonyl-[protein] + ADP + H(+). Tyrosine-sulfated glycopeptide receptor with a serine/threonine-protein kinase activity. Regulates, in response to tyrosine-sulfated glycopeptide binding, a signaling cascade involved in cellular proliferation and plant growth. Not involved in PSK perception. Involved in plant immunity, with antagonistic effects on bacterial and fungal resistances. Mediates activation of the plasma membrane H(+)-ATPase by PSY1. Phosphorylates AHA2 at Thr-881. The protein is Tyrosine-sulfated glycopeptide receptor 1 of Arabidopsis thaliana (Mouse-ear cress).